The following is a 545-amino-acid chain: MLARTAAIRSLSRTLINSTKAARPAAAALASTRRLASTKAQPTEVSSILEERIKGVSDEANLNETGRVLAVGDGIARVFGLNNIQAEELVEFSSGVKGMALNLEPGQVGIVLFGSDRLVKEGELVKRTGNIVDVPVGPGLLGRVVDALGNPIDGKGPIDAAGRSRAQVKAPGILPRRSVHEPVQTGLKAVDALVPIGRGQRELIIGDRQTGKTAVALDTILNQKRWNNGSDESKKLYCVYVAVGQKRSTVAQLVQTLEQHDAMKYSIIVAATASEAAPLQYLAPFTAASIGEWFRDNGKHALIVYDDLSKQAVAYRQLSLLLRRPPGREAYPGDVFYLHSRLLERAAKLSEKEGSGSLTALPVIETQGGDVSAYIPTNVISITDGQIFLEAELFYKGIRPAINVGLSVSRVGSAAQVKALKQVAGSLKLFLAQYREVAAFAQFGSDLDASTKQTLVRGERLTQLLKQNQYSPLATEEQVPLIYAGVNGHLDGIELSRIGEFESSFLSYLKSNHNELLTEIREKGELSKELLASLKSATESFVATF.

A mitochondrion-targeting transit peptide spans 1-35 (MLARTAAIRSLSRTLINSTKAARPAAAALASTRRL). Ser57 and Ser178 each carry phosphoserine. Residue 206 to 213 (GDRQTGKT) participates in ATP binding.

Belongs to the ATPase alpha/beta chains family. In terms of assembly, F-type ATPases have 2 components, CF(1) - the catalytic core - and CF(0) - the membrane proton channel. CF(1) has five subunits: alpha(3), beta(3), gamma(1), delta(1), epsilon(1). CF(0) has three main subunits: a, b and c.

Its subcellular location is the mitochondrion inner membrane. Its function is as follows. Mitochondrial membrane ATP synthase (F(1)F(0) ATP synthase or Complex V) produces ATP from ADP in the presence of a proton gradient across the membrane which is generated by electron transport complexes of the respiratory chain. F-type ATPases consist of two structural domains, F(1) - containing the extramembraneous catalytic core, and F(0) - containing the membrane proton channel, linked together by a central stalk and a peripheral stalk. During catalysis, ATP synthesis in the catalytic domain of F(1) is coupled via a rotary mechanism of the central stalk subunits to proton translocation. Subunits alpha and beta form the catalytic core in F(1). Rotation of the central stalk against the surrounding alpha(3)beta(3) subunits leads to hydrolysis of ATP in three separate catalytic sites on the beta subunits. Subunit alpha does not bear the catalytic high-affinity ATP-binding sites. The protein is ATP synthase subunit alpha, mitochondrial (ATP1) of Saccharomyces cerevisiae (strain ATCC 204508 / S288c) (Baker's yeast).